The sequence spans 125 residues: uncharacterized protein (125 aa).

The protein belongs to the asfivirus B125R family.

This is an uncharacterized protein from Ornithodoros (relapsing fever ticks).